A 337-amino-acid chain; its full sequence is Terpene cyclase (337 aa).

A helical transmembrane segment spans residues 5 to 25 (ASVIFLSLSVLAAVGVWGPFV). N-linked (GlcNAc...) asparagine glycosylation occurs at Asn-65. Transmembrane regions (helical) follow at residues 72 to 92 (IAYC…VILC), 111 to 131 (GLLS…MSFI), 149 to 169 (ALIL…LNVL), 177 to 197 (IWGI…ARII), 222 to 242 (VAGG…LGIF), 267 to 287 (LQVD…HELI), and 298 to 318 (LGGL…AAAW).

It belongs to the membrane-bound ascI terpene cyclase family.

The protein localises to the membrane. It participates in antifungal biosynthesis. Cyclase; part of the gene cluster that mediates the biosynthesis of the tetrahydropyranyl antifungal agent lanomycin that acts as an inhibitor of CYP51 and blocks the ergosterol biosynthesis. The biosynthesis probably begins with the formation of an hexaketide, followed by methionine mediated alkylation of C-2 and C-6, and methylation of the reduced C-3 oxygen, pyran forming reductive ring closure, oxygenation of C-4, beta-keto reduction, enoyl reduction and dehydration of the remaining oxygens, and finally, acylation with glycine to complete the biosynthesis. The protein is Terpene cyclase of Pyrenophora dematioidea (Helminthosporium dematioideum).